Reading from the N-terminus, the 2615-residue chain is Collagen alpha-5(VI) chain (2615 aa).

An N-terminal signal peptide occupies residues 1–18; it reads MKILLIIFVLIIWTETLA. A nonhelical region region spans residues 19-1394; it reads DQSPGPGPVY…TCCCTFCKCP (1376 aa). VWFA domains lie at 30 to 209, 236 to 413, 442 to 612, 628 to 797, 814 to 987, 1005 to 1178, and 1194 to 1376; these read DVVF…IKDV, DLVF…LKKL, DIHF…KNEV, DIMF…ERKL, DVVF…FTLV, DVIF…KKRI, and DIVV…KLSQ. Residues Asn-201 and Asn-260 are each glycosylated (N-linked (GlcNAc...) asparagine). Asn-835 carries an N-linked (GlcNAc...) asparagine glycan. Collagen-like domains lie at 1395–1446, 1434–1490, 1464–1520, 1524–1580, 1579–1629, and 1674–1729; these read GIPG…GCPG, GPQG…KGDP, GDDG…PGQN, KGQK…TLGA, GAEG…LGKK, and GDAG…MAGQ. The interval 1395–1728 is triple-helical region; the sequence is GIPGPHGTRG…GQRGIKGMAG (334 aa). A disordered region spans residues 1404 to 1693; it reads GLQAMKGSQG…NPGIPGGPGP (290 aa). Positions 1430-1432 match the Cell attachment site motif; that stretch reads RGD. The span at 1511–1522 shows a compositional bias: low complexity; that stretch reads PGDPGNPGQNNN. 2 stretches are compositionally biased toward low complexity: residues 1601 to 1611 and 1622 to 1641; these read SQGQKGPQGSP and RPGLLGKKGEPGLPGDLGPV. The tract at residues 1729–2615 is nonhelical region; the sequence is QPVYSQCDLI…EDKEMEATDI (887 aa). VWFA domains lie at 1758–1965, 1963–2154, and 2291–2487; these read ELVF…MDVV, DVVF…AKFL, and DVAF…VKPF. Residue Asn-2509 is glycosylated (N-linked (GlcNAc...) asparagine).

Belongs to the type VI collagen family. As to quaternary structure, trimers composed of three different chains: alpha-1(VI), alpha-2(VI), and alpha-3(VI) or alpha-5(VI) or alpha-6(VI). In terms of processing, prolines at the third position of the tripeptide repeating unit (G-X-Y) are hydroxylated in some or all of the chains. Expressed in skin, followed by lung, small intestine, colon and testis. In skin, it is expressed in the epidermis with strongest staining in suprabasal viable layers. In ATOD patients, it is absent in the most differentiated upper spinous and granular layers (at protein level).

The protein resides in the secreted. It is found in the extracellular space. It localises to the extracellular matrix. Collagen VI acts as a cell-binding protein. This Homo sapiens (Human) protein is Collagen alpha-5(VI) chain (COL6A5).